Reading from the N-terminus, the 367-residue chain is Glutamate 5-kinase (367 aa).

Lys-9 provides a ligand contact to ATP. Ser-49, Asp-136, and Asn-148 together coordinate substrate. ATP contacts are provided by residues 168–169 (TD) and 210–216 (TGGMKSK). The 75-residue stretch at 276–350 (SGQIEVDAGA…GMQSQDIQVR (75 aa)) folds into the PUA domain.

The protein belongs to the glutamate 5-kinase family.

It localises to the cytoplasm. The enzyme catalyses L-glutamate + ATP = L-glutamyl 5-phosphate + ADP. The protein operates within amino-acid biosynthesis; L-proline biosynthesis; L-glutamate 5-semialdehyde from L-glutamate: step 1/2. Functionally, catalyzes the transfer of a phosphate group to glutamate to form L-glutamate 5-phosphate. The protein is Glutamate 5-kinase of Bacillus cereus (strain B4264).